Consider the following 483-residue polypeptide: Probable gamma-aminobutyrate transaminase 4 (483 aa).

Pyridoxal 5'-phosphate is bound at residue 138–139; sequence GS. Tyr-171 is a binding site for substrate. Residue Asp-278 participates in pyridoxal 5'-phosphate binding. Residue Lys-307 coordinates substrate. Lys-307 is modified (N6-(pyridoxal phosphate)lysine).

It belongs to the class-III pyridoxal-phosphate-dependent aminotransferase family. Not detected in roots, stems, flowers or leaves of healthy plants.

It is found in the cytoplasm. The enzyme catalyses 4-aminobutanoate + pyruvate = succinate semialdehyde + L-alanine. It catalyses the reaction 4-aminobutanoate + glyoxylate = succinate semialdehyde + glycine. Its function is as follows. Transaminase that degrades gamma-amino butyric acid (GABA). The sequence is that of Probable gamma-aminobutyrate transaminase 4 (GABA-T) from Oryza sativa subsp. japonica (Rice).